A 72-amino-acid chain; its full sequence is VKRPMNAFMVWSQIERRKIMEQSPDMHNAEISKRLGKRWKLLKDSDKIPFIREAERLRLKHMADYPDYKYRP.

A DNA-binding region (HMG box) is located at residues 1 to 69 (VKRPMNAFMV…KHMADYPDYK (69 aa)).

The protein localises to the nucleus. This chain is SRY-related protein AES4, found in Alligator mississippiensis (American alligator).